Reading from the N-terminus, the 1070-residue chain is DNA-directed RNA polymerase subunit beta (1070 aa).

It belongs to the RNA polymerase beta chain family. As to quaternary structure, in plastids the minimal PEP RNA polymerase catalytic core is composed of four subunits: alpha, beta, beta', and beta''. When a (nuclear-encoded) sigma factor is associated with the core the holoenzyme is formed, which can initiate transcription.

It is found in the plastid. The protein localises to the chloroplast. It catalyses the reaction RNA(n) + a ribonucleoside 5'-triphosphate = RNA(n+1) + diphosphate. DNA-dependent RNA polymerase catalyzes the transcription of DNA into RNA using the four ribonucleoside triphosphates as substrates. This Gossypium hirsutum (Upland cotton) protein is DNA-directed RNA polymerase subunit beta.